The following is a 441-amino-acid chain: uncharacterized protein (441 aa).

Transmembrane regions (helical) follow at residues 21–41, 51–71, 94–114, 118–138, 150–170, 195–215, 239–259, 260–280, 291–311, 334–354, 363–383, and 419–439; these read VVVALTFSAIVGGLVAGMSLG, LGGGATIALSYAMLGTFAVAI, AASTTGLKYAVLVALVLVTMS, VIPVHIAFIPILIPPLLGVFA, VLTFGLITPYMVLPVGFGGIF, AMLLPGAGMIFGLLLAIFVSY, QHILVAALGIIAALGVQLYTG, SMIIGALAGFMVFTFGGVIAW, VHMMAMIGFIMIAAAGFAAVM, LAALLMLVVGLLVTMGIGSSF, IYVPLSLAFGFSPMATIALVG, and VVPTFIHYNIPLIIFGWIAAM.

The protein resides in the cell membrane. This is an uncharacterized protein from Vibrio parahaemolyticus serotype O3:K6 (strain RIMD 2210633).